The chain runs to 805 residues: Probable exo-1,4-beta-xylosidase xlnD (805 aa).

The N-terminal stretch at 1 to 17 (MAVAALALLALLPQALG) is a signal peptide. 5 N-linked (GlcNAc...) asparagine glycosylation sites follow: asparagine 20, asparagine 115, asparagine 140, asparagine 235, and asparagine 244. Aspartate 308 is an active-site residue. N-linked (GlcNAc...) asparagine glycosylation is found at asparagine 350, asparagine 383, asparagine 405, asparagine 434, asparagine 445, asparagine 486, asparagine 490, asparagine 622, asparagine 653, asparagine 667, asparagine 689, and asparagine 711.

Belongs to the glycosyl hydrolase 3 family.

It is found in the secreted. The catalysed reaction is Hydrolysis of (1-&gt;4)-beta-D-xylans, to remove successive D-xylose residues from the non-reducing termini.. It participates in glycan degradation; xylan degradation. Functionally, xylan 1,4-beta-xylosidase involved in the hydrolysis of xylan, a major structural heterogeneous polysaccharide found in plant biomass representing the second most abundant polysaccharide in the biosphere, after cellulose. This Aspergillus aculeatus protein is Probable exo-1,4-beta-xylosidase xlnD (xlnD).